Consider the following 153-residue polypeptide: Ribosome maturation factor RimP (153 aa).

This sequence belongs to the RimP family.

It localises to the cytoplasm. Functionally, required for maturation of 30S ribosomal subunits. The chain is Ribosome maturation factor RimP from Nostoc sp. (strain PCC 7120 / SAG 25.82 / UTEX 2576).